The following is a 210-amino-acid chain: Large ribosomal subunit protein uL3 (210 aa).

The tract at residues 133 to 152 (ATHGNSLSHRVHGSTGQNQT) is disordered. An N5-methylglutamine modification is found at Gln-151.

Belongs to the universal ribosomal protein uL3 family. In terms of assembly, part of the 50S ribosomal subunit. Forms a cluster with proteins L14 and L19. Post-translationally, methylated by PrmB.

Its function is as follows. One of the primary rRNA binding proteins, it binds directly near the 3'-end of the 23S rRNA, where it nucleates assembly of the 50S subunit. This chain is Large ribosomal subunit protein uL3, found in Francisella tularensis subsp. holarctica (strain FTNF002-00 / FTA).